Here is a 407-residue protein sequence, read N- to C-terminus: Phosphopentomutase (407 aa).

Mn(2+) is bound by residues Asp10, Asp306, His311, Asp347, His348, and His359.

It belongs to the phosphopentomutase family. Mn(2+) serves as cofactor.

The protein localises to the cytoplasm. The enzyme catalyses 2-deoxy-alpha-D-ribose 1-phosphate = 2-deoxy-D-ribose 5-phosphate. The catalysed reaction is alpha-D-ribose 1-phosphate = D-ribose 5-phosphate. Its pathway is carbohydrate degradation; 2-deoxy-D-ribose 1-phosphate degradation; D-glyceraldehyde 3-phosphate and acetaldehyde from 2-deoxy-alpha-D-ribose 1-phosphate: step 1/2. Functionally, isomerase that catalyzes the conversion of deoxy-ribose 1-phosphate (dRib-1-P) and ribose 1-phosphate (Rib-1-P) to deoxy-ribose 5-phosphate (dRib-5-P) and ribose 5-phosphate (Rib-5-P), respectively. In Sodalis glossinidius (strain morsitans), this protein is Phosphopentomutase.